The primary structure comprises 185 residues: Large ribosomal subunit protein uL5 (185 aa).

The protein belongs to the universal ribosomal protein uL5 family. Part of the 50S ribosomal subunit; part of the 5S rRNA/L5/L18/L25 subcomplex. Contacts the 5S rRNA and the P site tRNA. Forms a bridge to the 30S subunit in the 70S ribosome.

In terms of biological role, this is one of the proteins that bind and probably mediate the attachment of the 5S RNA into the large ribosomal subunit, where it forms part of the central protuberance. In the 70S ribosome it contacts protein S13 of the 30S subunit (bridge B1b), connecting the 2 subunits; this bridge is implicated in subunit movement. Contacts the P site tRNA; the 5S rRNA and some of its associated proteins might help stabilize positioning of ribosome-bound tRNAs. This chain is Large ribosomal subunit protein uL5, found in Caulobacter sp. (strain K31).